Reading from the N-terminus, the 369-residue chain is Putative gustatory receptor 39b (369 aa).

At 1-32 the chain is on the cytoplasmic side; that stretch reads MLYSFHPYLKYFALLGLVPWSESCAQSKFVQK. A helical membrane pass occupies residues 33–53; that stretch reads VYSAILIILNAVHFGISIYFP. Over 54–59 the chain is Extracellular; it reads QSAELF. The chain crosses the membrane as a helical span at residues 60–80; it reads LSLMVNVIVFVARIVCVTVII. At 81–122 the chain is on the cytoplasmic side; the sequence is LQVMVHYDDYFRFCREMKYLGLRLQCELKIHVGRLKWQSYAK. Residues 123–143 traverse the membrane as a helical segment; sequence ILALGIGFLVTVLPSIYVALS. Residues 144–147 are Extracellular-facing; the sequence is GSLL. The chain crosses the membrane as a helical span at residues 148–168; the sequence is YFWSSLLSILIIRMQFVLVLL. At 169 to 224 the chain is on the cytoplasmic side; sequence NVELLGHHVSLLGIRLQNVLECHLMGANCTLDGNANRLCSLEFLLALKQSHMQLHY. The helical transmembrane segment at 225–245 threads the bilayer; sequence LFTHFNDLFGWSILGTYVVLF. The Extracellular portion of the chain corresponds to 246–265; that stretch reads SDSTVNIYWTQQVLVEVYEY. The helical transmembrane segment at 266-286 threads the bilayer; the sequence is KYLYATFSVFVPSFFNILVFC. Residues 287 to 348 lie on the Cytoplasmic side of the membrane; the sequence is RCGEFCQRQS…EGFMSTDNSL (62 aa). The helical transmembrane segment at 349 to 368 threads the bilayer; it reads LMSILAAKVTYLIVLMQFSS. Position 369 (valine 369) is a topological domain, extracellular.

It belongs to the insect chemoreceptor superfamily. Gustatory receptor (GR) family. Gr2a subfamily. Expressed in the adult labellar chemosensory neurons and in abdominal ganglions. In larvae, is expressed in neurons of the dorsal and posterior pharyngeal sense organs.

Its subcellular location is the cell membrane. Its function is as follows. Probable gustatory receptor which mediates acceptance or avoidance behavior, depending on its substrates. Has also atypical sensory function in organ not limited to conventional taste sensing like abdominal ganglions. In Drosophila melanogaster (Fruit fly), this protein is Putative gustatory receptor 39b (Gr39b).